A 111-amino-acid polypeptide reads, in one-letter code: UPF0339 protein in ptx operon 5'region (111 aa).

2 tandem repeats follow at residues 10–58 (DKAG…RYER) and 61–109 (SGAD…VVEV).

This sequence belongs to the UPF0339 family. Duplicated subfamily.

This chain is UPF0339 protein in ptx operon 5'region, found in Stutzerimonas stutzeri (Pseudomonas stutzeri).